Consider the following 581-residue polypeptide: NADH-quinone oxidoreductase subunit C/D (581 aa).

An NADH dehydrogenase I subunit C region spans residues 1–172 (MSATDLVSEL…PLFNMTAALF (172 aa)). The interval 196–581 (ELMILNYGPH…IDYVMSDVDR (386 aa)) is NADH dehydrogenase I subunit D.

In the N-terminal section; belongs to the complex I 30 kDa subunit family. It in the C-terminal section; belongs to the complex I 49 kDa subunit family. As to quaternary structure, NDH-1 is composed of 13 different subunits. Subunits NuoB, CD, E, F, and G constitute the peripheral sector of the complex.

It localises to the cell inner membrane. The enzyme catalyses a quinone + NADH + 5 H(+)(in) = a quinol + NAD(+) + 4 H(+)(out). Its function is as follows. NDH-1 shuttles electrons from NADH, via FMN and iron-sulfur (Fe-S) centers, to quinones in the respiratory chain. The immediate electron acceptor for the enzyme in this species is believed to be ubiquinone. Couples the redox reaction to proton translocation (for every two electrons transferred, four hydrogen ions are translocated across the cytoplasmic membrane), and thus conserves the redox energy in a proton gradient. The polypeptide is NADH-quinone oxidoreductase subunit C/D (Rhodopseudomonas palustris (strain HaA2)).